We begin with the raw amino-acid sequence, 102 residues long: Large ribosomal subunit protein bL28 (102 aa).

Belongs to the bacterial ribosomal protein bL28 family.

The protein is Large ribosomal subunit protein bL28 of Bradyrhizobium diazoefficiens (strain JCM 10833 / BCRC 13528 / IAM 13628 / NBRC 14792 / USDA 110).